Reading from the N-terminus, the 128-residue chain is Large ribosomal subunit protein bL17 (128 aa).

The protein belongs to the bacterial ribosomal protein bL17 family. Part of the 50S ribosomal subunit. Contacts protein L32.

In Pseudomonas syringae pv. syringae (strain B728a), this protein is Large ribosomal subunit protein bL17.